The chain runs to 226 residues: Biosynthetic peptidoglycan transglycosylase (226 aa).

Residues Phe-8–Leu-28 form a helical membrane-spanning segment.

Belongs to the glycosyltransferase 51 family.

The protein resides in the cell inner membrane. It catalyses the reaction [GlcNAc-(1-&gt;4)-Mur2Ac(oyl-L-Ala-gamma-D-Glu-L-Lys-D-Ala-D-Ala)](n)-di-trans,octa-cis-undecaprenyl diphosphate + beta-D-GlcNAc-(1-&gt;4)-Mur2Ac(oyl-L-Ala-gamma-D-Glu-L-Lys-D-Ala-D-Ala)-di-trans,octa-cis-undecaprenyl diphosphate = [GlcNAc-(1-&gt;4)-Mur2Ac(oyl-L-Ala-gamma-D-Glu-L-Lys-D-Ala-D-Ala)](n+1)-di-trans,octa-cis-undecaprenyl diphosphate + di-trans,octa-cis-undecaprenyl diphosphate + H(+). Its pathway is cell wall biogenesis; peptidoglycan biosynthesis. Functionally, peptidoglycan polymerase that catalyzes glycan chain elongation from lipid-linked precursors. The chain is Biosynthetic peptidoglycan transglycosylase from Shewanella frigidimarina (strain NCIMB 400).